The sequence spans 333 residues: Phosphoenolpyruvate transferase (333 aa).

Residue Asp65 participates in 7,8-didemethyl-8-hydroxy-5-deazariboflavin binding.

It belongs to the CofD family. As to quaternary structure, homodimer. The cofactor is Mg(2+).

The catalysed reaction is enolpyruvoyl-2-diphospho-5'-guanosine + 7,8-didemethyl-8-hydroxy-5-deazariboflavin = dehydro coenzyme F420-0 + GMP + H(+). It functions in the pathway cofactor biosynthesis; coenzyme F420 biosynthesis. In terms of biological role, catalyzes the transfer of the phosphoenolpyruvate moiety from enoylpyruvoyl-2-diphospho-5'-guanosine (EPPG) to 7,8-didemethyl-8-hydroxy-5-deazariboflavin (FO) with the formation of dehydro coenzyme F420-0 and GMP. The polypeptide is Phosphoenolpyruvate transferase (Mycobacterium leprae (strain TN)).